The primary structure comprises 988 residues: MDQGRQVFSVDLLERYATKNRGMITCMAAGNDVIVLGTSKGWIIRYDFGVGSSNDIDLAVGRTGEQSIHKVFVDPGGSHCIATVTGVGGAETFYTHAKWLKPRVLSRLKGLLVNAVAWNRQQITEVSTKEIILGTQDGQLFEMAVDEKDKREKYIKFLFELEELPEAFKALQMETANISSGMRYYVMAVTPTRLYSFTGIGTLESVFASYKERAVHFMELPGEIPNSELHFFIKQRRAVHFAWLSGTGIYHGGLNFGAQHSYPNGDENFVENKALLDYSKLSDGTEAVKPGSMALSEYHFLLLIGNKVKVVNRISEQIIEELQFDITSDSVSRGIIGLCSDASANVFYAYDQNSIFQVSVIDEGRDMWKVYLDLKVYAAALANCRDPLQRDQVYLVQAESAFTDKEYLRAASFYAKINYVISFEEVTLKFISINEPEALRTFLLHKLDNLSKDDKCQITMISTWATELYLDKINRLLLEDDTAIENRDSEYHSVIQEFRAFMSDCKDELDEATTVKILESYGRVEELVYFANLKEQYEIVVLHYIQQGEAKKALEVLQKSSVSVELQYQFAPELIMLDAYETVESWMANKNLNPRRLITAMMRYSSGPHAKNETHEVIKYLEFCVHRLHNEDPGIHSLLLSLYAKQEDDGALLRFLQCKFGKGRENGPEFFYDPKYALRLCLKERRTRACVHIYSMMSMHEEAVALALQIDPELAMAEADKVEDDEDLRKKLWLMVAKHVVKQEKGAKRENIRKAIAFLKETDGLLKIEDILPFFPDFALIDDFKEAICSSLEDYNKQIEQLKEEMNDATRGADNIRNDISALTQRYAVIDRDEECGVCKRKILMMSGDFRMAQGYSSAGPLAPFYVFPCGHSFHAQCLITHVTSCAHEEQAEHILDLQKQLTLLGSETRRDINGNRSDEPITSTTTADKLRSELDDAIASECPFCGELMINEITLPFIKPEDSQYSTSWDLRSETNLANQRTISLPV.

Residues 589-749 (NKNLNPRRLI…VVKQEKGAKR (161 aa)) form a CHCR repeat. A coiled-coil region spans residues 785 to 819 (KEAICSSLEDYNKQIEQLKEEMNDATRGADNIRND). An RING-type; degenerate zinc finger spans residues 836–886 (CGVCKRKILMMSGDFRMAQGYSSAGPLAPFYVFPCGHSFHAQCLITHVTSC).

This sequence belongs to the VPS18 family. Core component of at least two putative endosomal tethering complexes, the homotypic fusion and vacuole protein sorting (HOPS) complex and the class C core vacuole/endosome tethering (CORVET) complex. Their common core is composed of the class C Vps proteins VPS11, VCL1, VPS18 and VPS33, which in HOPS further associates with VPS39 and VPS41 and in CORVET with VPS3.

It is found in the endosome membrane. It localises to the vacuole membrane. The protein localises to the cytoplasm. Its function is as follows. Essential protein required during embryogenesis. Believed to act as a core component of the putative HOPS endosomal tethering complex and of the class C core vacuole/endosome tethering (CORVET) complex. CORVET is required for vacuolar transport of SYP22. HOPS is required for the central vacuole formation. Involved in root development. Plays a role in vesicle-mediated protein trafficking to lysosomal compartments including the endocytic membrane transport pathways. The chain is Vacuolar sorting protein 18 from Arabidopsis thaliana (Mouse-ear cress).